We begin with the raw amino-acid sequence, 150 residues long: Ribosome maturation factor RimP (150 aa).

This sequence belongs to the RimP family.

Its subcellular location is the cytoplasm. Functionally, required for maturation of 30S ribosomal subunits. This Yersinia pestis bv. Antiqua (strain Antiqua) protein is Ribosome maturation factor RimP.